Consider the following 1270-residue polypeptide: DNA-directed RNA polymerase subunit beta (1270 aa).

It belongs to the RNA polymerase beta chain family. In terms of assembly, the RNAP catalytic core consists of 2 alpha, 1 beta, 1 beta' and 1 omega subunit. When a sigma factor is associated with the core the holoenzyme is formed, which can initiate transcription.

The catalysed reaction is RNA(n) + a ribonucleoside 5'-triphosphate = RNA(n+1) + diphosphate. In terms of biological role, DNA-dependent RNA polymerase catalyzes the transcription of DNA into RNA using the four ribonucleoside triphosphates as substrates. This is DNA-directed RNA polymerase subunit beta from Bacteroides thetaiotaomicron (strain ATCC 29148 / DSM 2079 / JCM 5827 / CCUG 10774 / NCTC 10582 / VPI-5482 / E50).